The chain runs to 212 residues: Cell division protein YtfB (212 aa).

A helical membrane pass occupies residues 34-50 (GIIIAAIVLVVGFLLPS). The disordered stretch occupies residues 88 to 127 (NDPDQVAPVAPEPIQEGQPEEQPQTTQTQPFQPDSGIDNQ). Residues 99-120 (EPIQEGQPEEQPQTTQTQPFQP) show a composition bias toward low complexity. Residues 117–212 (PFQPDSGIDN…QPDGSFIRAR (96 aa)) are oapA.

It belongs to the OapA family.

Its subcellular location is the cell inner membrane. Cell division protein whose function is related to the generation of a transient cell wall structure. Function is linked to the late stages of cell division. The chain is Cell division protein YtfB (ytfB) from Escherichia coli (strain K12).